Consider the following 339-residue polypeptide: N-acetyl-gamma-glutamyl-phosphate reductase 1 (339 aa).

Residue C149 is part of the active site.

The protein belongs to the NAGSA dehydrogenase family. Type 1 subfamily.

It is found in the cytoplasm. It carries out the reaction N-acetyl-L-glutamate 5-semialdehyde + phosphate + NADP(+) = N-acetyl-L-glutamyl 5-phosphate + NADPH + H(+). It participates in amino-acid biosynthesis; L-arginine biosynthesis; N(2)-acetyl-L-ornithine from L-glutamate: step 3/4. In terms of biological role, catalyzes the NADPH-dependent reduction of N-acetyl-5-glutamyl phosphate to yield N-acetyl-L-glutamate 5-semialdehyde. This Lactiplantibacillus plantarum (strain ATCC BAA-793 / NCIMB 8826 / WCFS1) (Lactobacillus plantarum) protein is N-acetyl-gamma-glutamyl-phosphate reductase 1.